The chain runs to 378 residues: Succinyl-diaminopimelate desuccinylase 2 (378 aa).

Position 68 (H68) interacts with Zn(2+). Residue D70 is part of the active site. Residue D101 coordinates Zn(2+). E135 functions as the Proton acceptor in the catalytic mechanism. Zn(2+) is bound by residues E136, E164, and H350.

It belongs to the peptidase M20A family. DapE subfamily. In terms of assembly, homodimer. It depends on Zn(2+) as a cofactor. Co(2+) serves as cofactor.

It carries out the reaction N-succinyl-(2S,6S)-2,6-diaminopimelate + H2O = (2S,6S)-2,6-diaminopimelate + succinate. It participates in amino-acid biosynthesis; L-lysine biosynthesis via DAP pathway; LL-2,6-diaminopimelate from (S)-tetrahydrodipicolinate (succinylase route): step 3/3. Functionally, catalyzes the hydrolysis of N-succinyl-L,L-diaminopimelic acid (SDAP), forming succinate and LL-2,6-diaminopimelate (DAP), an intermediate involved in the bacterial biosynthesis of lysine and meso-diaminopimelic acid, an essential component of bacterial cell walls. The protein is Succinyl-diaminopimelate desuccinylase 2 of Alteromonas mediterranea (strain DSM 17117 / CIP 110805 / LMG 28347 / Deep ecotype).